The chain runs to 908 residues: DNA (cytosine-5)-methyltransferase 3A (908 aa).

The segment covering methionine 1–serine 13 has biased composition (low complexity). 2 disordered regions span residues methionine 1–arginine 183 and asparagine 226–glutamate 281. A compositionally biased stretch (basic and acidic residues) spans leucine 14–glutamate 37. Residues lysine 44–histidine 54 show a composition bias toward basic residues. A compositionally biased stretch (polar residues) spans threonine 69–glycine 80. At serine 102 the chain carries Phosphoserine. The segment covering glycine 110–alanine 124 has biased composition (low complexity). Threonine 120 carries the phosphothreonine modification. A Glycyl lysine isopeptide (Lys-Gly) (interchain with G-Cter in SUMO2) cross-link involves residue lysine 158. An Omega-N-methylarginine modification is found at arginine 167. An interaction with DNMT1 and DNMT3B region spans residues serine 195 to asparagine 399. Residues serine 239 and serine 251 each carry the phosphoserine modification. Residues alanine 242–threonine 256 show a composition bias toward polar residues. Threonine 257 is subject to Phosphothreonine. Basic and acidic residues predominate over residues alanine 265–aspartate 275. A PWWP domain is found at isoleucine 288–phenylalanine 346. 2 positions are modified to phosphoserine: serine 386 and serine 389. The segment at alanine 443–lysine 462 is disordered. The ADD domain occupies glutamate 478–aspartate 610. The GATA-type; atypical zinc finger occupies isoleucine 489–glutamate 519. The interaction with the PRC2/EED-EZH2 complex stretch occupies residues cysteine 490–cysteine 582. Residues glutamine 530–glycine 586 form a PHD-type; atypical zinc finger. An SAM-dependent MTase C5-type domain is found at isoleucine 630–valine 908. S-adenosyl-L-methionine contacts are provided by residues aspartate 637 to threonine 641, glutamate 660, and aspartate 682 to arginine 684. Cysteine 706 is a catalytic residue. An S-methylcysteine; by autocatalysis modification is found at cysteine 706. An S-adenosyl-L-methionine-binding site is contributed by arginine 887–tryptophan 889.

The protein belongs to the class I-like SAM-binding methyltransferase superfamily. C5-methyltransferase family. In terms of assembly, heterotetramer composed of 1 DNMT3A homodimer and 2 DNMT3L subunits (DNMT3L-DNMT3A-DNMT3A-DNMT3L). Interacts with DNMT1 and DNMT3B. Interacts with MPHOSPH8. Interacts with histone H3 that is not methylated at 'Lys-4' (H3K4). Binds the ZBTB18 transcriptional repressor. Interacts with SETDB1. Associates with HDAC1 through its ADD domain. Interacts with UHRF1. Interacts with the PRC2/EED-EZH2 complex. Interacts with UBC9, PIAS1 and PIAS2. Interacts with SPOCD1. Interacts with ZNF263; recruited to the SIX3 promoter along with other proteins involved in chromatin modification and transcriptional corepression where it contributes to transcriptional repression. In terms of processing, auto-methylated at Cys-706: auto-methylation takes place in absence of DNA substrate and inactivates the DNA methyltransferase activity. Inactivation by auto-methylation may be used to inactivate unused DNA methyltransferases in the cell. Sumoylated; sumoylation disrupts the ability to interact with histone deacetylases (HDAC1 and HDAC2) and repress transcription. As to expression, isoform 1 is expressed ubiquitously at low levels. Expression of isoform 2 is restricted to tissues containing cells which are undergoing active de novo methylation, including spleen, testis and thymus.

It localises to the nucleus. It is found in the chromosome. Its subcellular location is the cytoplasm. The enzyme catalyses a 2'-deoxycytidine in DNA + S-adenosyl-L-methionine = a 5-methyl-2'-deoxycytidine in DNA + S-adenosyl-L-homocysteine + H(+). It catalyses the reaction L-cysteinyl-[protein] + S-adenosyl-L-methionine = S-methyl-L-cysteinyl-[protein] + S-adenosyl-L-homocysteine + H(+). Its activity is regulated as follows. Activated by binding to the regulatory factor DNMT3L. Auto-methylation at Cys-706 in absence of DNA inactivates the DNA methyltransferase activity. Required for genome-wide de novo methylation and is essential for the establishment of DNA methylation patterns during development. DNA methylation is coordinated with methylation of histones. It modifies DNA in a non-processive manner and also methylates non-CpG sites. May preferentially methylate DNA linker between 2 nucleosomal cores and is inhibited by histone H1. Plays a role in paternal and maternal imprinting. Required for methylation of most imprinted loci in germ cells. Acts as a transcriptional corepressor for ZBTB18. Recruited to trimethylated 'Lys-36' of histone H3 (H3K36me3) sites. Can actively repress transcription through the recruitment of HDAC activity. Also has weak auto-methylation activity on Cys-706 in absence of DNA. This Mus musculus (Mouse) protein is DNA (cytosine-5)-methyltransferase 3A.